Here is a 218-residue protein sequence, read N- to C-terminus: Protein GrpE (218 aa).

Positions 1–21 (MSDKQREAERQQSEDKAHSEA) are enriched in basic and acidic residues. The disordered stretch occupies residues 1 to 66 (MSDKQREAER…LEEARARAEE (66 aa)). Over residues 24 to 36 (AEAGQAPEAQAAE) the composition is skewed to low complexity.

Belongs to the GrpE family. In terms of assembly, homodimer.

The protein resides in the cytoplasm. In terms of biological role, participates actively in the response to hyperosmotic and heat shock by preventing the aggregation of stress-denatured proteins, in association with DnaK and GrpE. It is the nucleotide exchange factor for DnaK and may function as a thermosensor. Unfolded proteins bind initially to DnaJ; upon interaction with the DnaJ-bound protein, DnaK hydrolyzes its bound ATP, resulting in the formation of a stable complex. GrpE releases ADP from DnaK; ATP binding to DnaK triggers the release of the substrate protein, thus completing the reaction cycle. Several rounds of ATP-dependent interactions between DnaJ, DnaK and GrpE are required for fully efficient folding. This Alkalilimnicola ehrlichii (strain ATCC BAA-1101 / DSM 17681 / MLHE-1) protein is Protein GrpE.